We begin with the raw amino-acid sequence, 554 residues long: Inactive sesquithujene synthase (554 aa).

Mg(2+) contacts are provided by aspartate 308 and aspartate 312. 4 residues coordinate substrate: aspartate 308, aspartate 312, arginine 449, and asparagine 452. A DDXXD motif motif is present at residues 308 to 312 (DDMFD). Residues asparagine 452, serine 456, and glutamate 460 each coordinate Mg(2+).

It belongs to the terpene synthase family. As to quaternary structure, monomer. The cofactor is Mg(2+). Requires Mn(2+) as cofactor.

It is found in the cytoplasm. The protein operates within secondary metabolite biosynthesis; terpenoid biosynthesis. Non-functional sesquiterpene synthase having less than 1% of the activity found in cv. Delprim. The protein is Inactive sesquithujene synthase of Zea mays (Maize).